We begin with the raw amino-acid sequence, 860 residues long: Glucans biosynthesis glucosyltransferase H (860 aa).

6 helical membrane-spanning segments follow: residues 141–161 (FILL…MKGI), 187–207 (VLPY…FCWV), 515–535 (VFLT…FLVL), 572–592 (LFST…MLIW), 599–619 (FGGV…SVLL), and 682–702 (FLWW…VSVI).

The protein belongs to the glycosyltransferase 2 family. OpgH subfamily.

It localises to the cell inner membrane. It participates in glycan metabolism; osmoregulated periplasmic glucan (OPG) biosynthesis. Involved in the biosynthesis of osmoregulated periplasmic glucans (OPGs). This Pseudomonas paraeruginosa (strain DSM 24068 / PA7) (Pseudomonas aeruginosa (strain PA7)) protein is Glucans biosynthesis glucosyltransferase H.